The sequence spans 228 residues: Biosynthetic peptidoglycan transglycosylase (228 aa).

The chain crosses the membrane as a helical span at residues Ile-8–Ile-28.

This sequence belongs to the glycosyltransferase 51 family.

The protein localises to the cell inner membrane. It carries out the reaction [GlcNAc-(1-&gt;4)-Mur2Ac(oyl-L-Ala-gamma-D-Glu-L-Lys-D-Ala-D-Ala)](n)-di-trans,octa-cis-undecaprenyl diphosphate + beta-D-GlcNAc-(1-&gt;4)-Mur2Ac(oyl-L-Ala-gamma-D-Glu-L-Lys-D-Ala-D-Ala)-di-trans,octa-cis-undecaprenyl diphosphate = [GlcNAc-(1-&gt;4)-Mur2Ac(oyl-L-Ala-gamma-D-Glu-L-Lys-D-Ala-D-Ala)](n+1)-di-trans,octa-cis-undecaprenyl diphosphate + di-trans,octa-cis-undecaprenyl diphosphate + H(+). It participates in cell wall biogenesis; peptidoglycan biosynthesis. Peptidoglycan polymerase that catalyzes glycan chain elongation from lipid-linked precursors. The chain is Biosynthetic peptidoglycan transglycosylase from Chromobacterium violaceum (strain ATCC 12472 / DSM 30191 / JCM 1249 / CCUG 213 / NBRC 12614 / NCIMB 9131 / NCTC 9757 / MK).